The following is a 295-amino-acid chain: uncharacterized protein (295 aa).

This is an uncharacterized protein from Methanocaldococcus jannaschii (strain ATCC 43067 / DSM 2661 / JAL-1 / JCM 10045 / NBRC 100440) (Methanococcus jannaschii).